The following is a 141-amino-acid chain: Protein Turandot Z (141 aa).

The signal sequence occupies residues 1–23 (MYFAIRLSFVLAVLFCLTGNGNA).

This sequence belongs to the Turandot family.

It localises to the secreted. Functionally, a humoral factor that may play a role in stress tolerance. In Drosophila yakuba (Fruit fly), this protein is Protein Turandot Z.